The following is a 151-amino-acid chain: Aspartate carbamoyltransferase regulatory chain (151 aa).

Cysteine 107, cysteine 112, cysteine 135, and cysteine 138 together coordinate Zn(2+).

It belongs to the PyrI family. In terms of assembly, contains catalytic and regulatory chains. Requires Zn(2+) as cofactor.

Involved in allosteric regulation of aspartate carbamoyltransferase. The protein is Aspartate carbamoyltransferase regulatory chain of Thermococcus gammatolerans (strain DSM 15229 / JCM 11827 / EJ3).